The following is a 556-amino-acid chain: 2-succinyl-5-enolpyruvyl-6-hydroxy-3-cyclohexene-1-carboxylate synthase (556 aa).

Belongs to the TPP enzyme family. MenD subfamily. Homodimer. The cofactor is Mg(2+). Mn(2+) is required as a cofactor. Requires thiamine diphosphate as cofactor.

The enzyme catalyses isochorismate + 2-oxoglutarate + H(+) = 5-enolpyruvoyl-6-hydroxy-2-succinyl-cyclohex-3-ene-1-carboxylate + CO2. It functions in the pathway quinol/quinone metabolism; 1,4-dihydroxy-2-naphthoate biosynthesis; 1,4-dihydroxy-2-naphthoate from chorismate: step 2/7. The protein operates within quinol/quinone metabolism; menaquinone biosynthesis. Catalyzes the thiamine diphosphate-dependent decarboxylation of 2-oxoglutarate and the subsequent addition of the resulting succinic semialdehyde-thiamine pyrophosphate anion to isochorismate to yield 2-succinyl-5-enolpyruvyl-6-hydroxy-3-cyclohexene-1-carboxylate (SEPHCHC). In Shigella boydii serotype 18 (strain CDC 3083-94 / BS512), this protein is 2-succinyl-5-enolpyruvyl-6-hydroxy-3-cyclohexene-1-carboxylate synthase.